The primary structure comprises 277 residues: MENNETSVDSKSIKNFEVKTIHGSKSMDSGIYLDSSYKMDYPEMGVCIIINNKNFHKSTGMTPRSGTDVDAAKLRETFMALKYEVRNKNDLTREEIVELMKNASKEDHSKRSSFVCVILSHGDEGVIFGTDGPIDLKKLTSYFRGDYCRSLIGKPKLFIIQACRGTELDCGIETDSGTEDDMTCQKIPVEADFLYAYSTAPGYYSWRNPKDGSWFIQSLCSMLKLYAHKLEFMHILTRVNRKVATEFESFSLDSTFHAKKQIPCIVSMLTKELYFYH.

Methionine 1 is modified (N-acetylmethionine). 2 propeptides span residues 1–9 and 10–28; these read MENNETSVD and SKSI…KSMD. N6-acetyllysine is present on lysine 11. Serine 26 carries the phosphoserine modification. Catalysis depends on residues histidine 121 and cysteine 163. The residue at position 163 (cysteine 163) is an S-nitrosocysteine; in inhibited form.

It belongs to the peptidase C14A family. Heterotetramer that consists of two anti-parallel arranged heterodimers, each one formed by a 17 kDa (p17) and a 12 kDa (p12) subunit. Interacts with BIRC6/bruce. Cleavage by granzyme B, caspase-6, caspase-8 and caspase-10 generates the two active subunits. Additional processing of the propeptides is likely due to the autocatalytic activity of the activated protease. Active heterodimers between the small subunit of caspase-7 protease and the large subunit of caspase-3 also occur and vice versa. In terms of processing, S-nitrosylated on its catalytic site cysteine in unstimulated cell lines and denitrosylated upon activation of the Fas apoptotic pathway, associated with an increase in intracellular caspase activity. Fas therefore activates caspase-3 not only by inducing the cleavage of the caspase zymogen to its active subunits, but also by stimulating the denitrosylation of its active site thiol. Post-translationally, ubiquitinated by BIRC6; this activity is inhibited by DIABLO/SMAC.

Its subcellular location is the cytoplasm. The catalysed reaction is Strict requirement for an Asp residue at positions P1 and P4. It has a preferred cleavage sequence of Asp-Xaa-Xaa-Asp-|- with a hydrophobic amino-acid residue at P2 and a hydrophilic amino-acid residue at P3, although Val or Ala are also accepted at this position.. With respect to regulation, inhibited by BIRC6; following inhibition of BIRC6-caspase binding by DIABLO/SMAC, BIRC6 is subjected to caspase cleavage, leading to an increase in active caspases. Functionally, involved in the activation cascade of caspases responsible for apoptosis execution. At the onset of apoptosis, it proteolytically cleaves poly(ADP-ribose) polymerase PARP1 at a '216-Asp-|-Gly-217' bond. Cleaves and activates sterol regulatory element binding proteins (SREBPs) between the basic helix-loop-helix leucine zipper domain and the membrane attachment domain. Cleaves and activates caspase-6, -7 and -9 (CASP6, CASP7 and CASP9, respectively). Cleaves and inactivates interleukin-18 (IL18). Triggers cell adhesion in sympathetic neurons through RET cleavage. Cleaves IL-1 beta between an Asp and an Ala, releasing the mature cytokine which is involved in a variety of inflammatory processes. Cleaves and inhibits serine/threonine-protein kinase AKT1 in response to oxidative stress. Acts as an inhibitor of type I interferon production during virus-induced apoptosis by mediating cleavage of antiviral proteins CGAS, IRF3 and MAVS, thereby preventing cytokine overproduction. Also involved in pyroptosis by mediating cleavage and activation of gasdermin-E (GSDME). Cleaves XRCC4 and phospholipid scramblase proteins XKR4, XKR8 and XKR9, leading to promote phosphatidylserine exposure on apoptotic cell surface. Cleaves BIRC6 following inhibition of BIRC6-caspase binding by DIABLO/SMAC. This is Caspase-3 (CASP3) from Mesocricetus auratus (Golden hamster).